A 124-amino-acid chain; its full sequence is Small ribosomal subunit protein uS12 (124 aa).

A disordered region spans residues 1-32 (MPTISQLIRHGRQKQKKRTKSPALKSSPQRRG). Residues 9–20 (RHGRQKQKKRTK) show a composition bias toward basic residues. D89 carries the 3-methylthioaspartic acid modification.

This sequence belongs to the universal ribosomal protein uS12 family. As to quaternary structure, part of the 30S ribosomal subunit. Contacts proteins S8 and S17. May interact with IF1 in the 30S initiation complex.

Its function is as follows. With S4 and S5 plays an important role in translational accuracy. Interacts with and stabilizes bases of the 16S rRNA that are involved in tRNA selection in the A site and with the mRNA backbone. Located at the interface of the 30S and 50S subunits, it traverses the body of the 30S subunit contacting proteins on the other side and probably holding the rRNA structure together. The combined cluster of proteins S8, S12 and S17 appears to hold together the shoulder and platform of the 30S subunit. The chain is Small ribosomal subunit protein uS12 from Leptospira borgpetersenii serovar Hardjo-bovis (strain JB197).